Here is a 210-residue protein sequence, read N- to C-terminus: ATP phosphoribosyltransferase (210 aa).

Belongs to the ATP phosphoribosyltransferase family. Short subfamily. In terms of assembly, heteromultimer composed of HisG and HisZ subunits.

It localises to the cytoplasm. It catalyses the reaction 1-(5-phospho-beta-D-ribosyl)-ATP + diphosphate = 5-phospho-alpha-D-ribose 1-diphosphate + ATP. Its pathway is amino-acid biosynthesis; L-histidine biosynthesis; L-histidine from 5-phospho-alpha-D-ribose 1-diphosphate: step 1/9. Functionally, catalyzes the condensation of ATP and 5-phosphoribose 1-diphosphate to form N'-(5'-phosphoribosyl)-ATP (PR-ATP). Has a crucial role in the pathway because the rate of histidine biosynthesis seems to be controlled primarily by regulation of HisG enzymatic activity. This Bacillus cytotoxicus (strain DSM 22905 / CIP 110041 / 391-98 / NVH 391-98) protein is ATP phosphoribosyltransferase.